The following is a 478-amino-acid chain: Siroheme synthase (478 aa).

The interval Met-1–Leu-207 is precorrin-2 dehydrogenase /sirohydrochlorin ferrochelatase. NAD(+) is bound by residues Lys-25 to Val-26 and Pro-46 to Ser-47. At Ser-132 the chain carries Phosphoserine. Residues Gly-220–Ser-478 form a uroporphyrinogen-III C-methyltransferase region. The active-site Proton acceptor is the Asp-252. The active-site Proton donor is Lys-274. S-adenosyl-L-methionine is bound by residues Gly-305 to Asp-307, Val-310, Thr-335 to Ala-336, Met-387, and Gly-416.

It in the N-terminal section; belongs to the precorrin-2 dehydrogenase / sirohydrochlorin ferrochelatase family. This sequence in the C-terminal section; belongs to the precorrin methyltransferase family.

The catalysed reaction is uroporphyrinogen III + 2 S-adenosyl-L-methionine = precorrin-2 + 2 S-adenosyl-L-homocysteine + H(+). It carries out the reaction precorrin-2 + NAD(+) = sirohydrochlorin + NADH + 2 H(+). It catalyses the reaction siroheme + 2 H(+) = sirohydrochlorin + Fe(2+). It functions in the pathway cofactor biosynthesis; adenosylcobalamin biosynthesis; precorrin-2 from uroporphyrinogen III: step 1/1. It participates in cofactor biosynthesis; adenosylcobalamin biosynthesis; sirohydrochlorin from precorrin-2: step 1/1. Its pathway is porphyrin-containing compound metabolism; siroheme biosynthesis; precorrin-2 from uroporphyrinogen III: step 1/1. The protein operates within porphyrin-containing compound metabolism; siroheme biosynthesis; siroheme from sirohydrochlorin: step 1/1. It functions in the pathway porphyrin-containing compound metabolism; siroheme biosynthesis; sirohydrochlorin from precorrin-2: step 1/1. Multifunctional enzyme that catalyzes the SAM-dependent methylations of uroporphyrinogen III at position C-2 and C-7 to form precorrin-2 via precorrin-1. Then it catalyzes the NAD-dependent ring dehydrogenation of precorrin-2 to yield sirohydrochlorin. Finally, it catalyzes the ferrochelation of sirohydrochlorin to yield siroheme. This Xylella fastidiosa (strain M23) protein is Siroheme synthase.